Here is an 85-residue protein sequence, read N- to C-terminus: Large ribosomal subunit protein bL27 (85 aa).

Residues 1-22 (MAHKKAGGSTNNGRDSESKRLG) are disordered.

It belongs to the bacterial ribosomal protein bL27 family.

The sequence is that of Large ribosomal subunit protein bL27 from Psychromonas ingrahamii (strain DSM 17664 / CCUG 51855 / 37).